The sequence spans 191 residues: Putative RNA-binding protein EEED8.4 (191 aa).

Residues 55-132 (KSVFIGNVDF…RPIVVTAKRT (78 aa)) form the RRM domain. The interval 136–160 (GMGHGVRGSSRGTFGRGRGAARGAP) is disordered.

The polypeptide is Putative RNA-binding protein EEED8.4 (Caenorhabditis elegans).